The chain runs to 293 residues: Small ribosomal subunit protein uS5 (293 aa).

A disordered region spans residues 1–56 (MADDAGAAGGPGGPGGPGMGNRGGFRGGFGSGIRGRGRGRGRGRGRGRGARGGKAE). Ala2 is modified (N-acetylalanine). Gly residues predominate over residues 7-34 (AAGGPGGPGGPGMGNRGGFRGGFGSGIR). Positions 35-51 (GRGRGRGRGRGRGRGAR) are enriched in basic residues. Glycyl lysine isopeptide (Lys-Gly) (interchain with G-Cter in ubiquitin) cross-links involve residues Lys54 and Lys58. In terms of domain architecture, S5 DRBM spans 102–165 (LKDEVLKIMP…ILAKLSIVPV (64 aa)). The residue at position 252 (Thr252) is a Phosphothreonine. Lys263 is modified (N6-acetyllysine). Ser264 is modified (phosphoserine). Thr270 is subject to Phosphothreonine. Position 275 is an N6-acetyllysine; alternate (Lys275). A Glycyl lysine isopeptide (Lys-Gly) (interchain with G-Cter in SUMO1); alternate cross-link involves residue Lys275. A Glycyl lysine isopeptide (Lys-Gly) (interchain with G-Cter in SUMO2); alternate cross-link involves residue Lys275. Lys275 is covalently cross-linked (Glycyl lysine isopeptide (Lys-Gly) (interchain with G-Cter in ubiquitin); alternate). The residue at position 281 (Ser281) is a Phosphoserine.

It belongs to the universal ribosomal protein uS5 family. In terms of assembly, component of the small ribosomal subunit. Interacts with zinc finger protein ZNF277 (via zinc-finger domains); the interaction is direct; the interaction is extra-ribosomal. Interaction with ZNF277 competes with the binding of RPS2 to protein arginine methyltransferase PRMT3. Citrullinated by PADI4 in the Arg/Gly-rich region. In terms of processing, asymmetric arginine dimethylation by PRMT3 occurs at multiple sites in the Arg/Gly-rich region. Post-translationally, monoubiquitinated at Lys-54 and Lys-58 by RNF10 when a ribosome has stalled during translation, leading to its degradation by the proteasome. Deubiquitinated at Lys-54 and Lys-58 by USP10, preventing degradation by the proteasome and promoting 40S ribosome subunit recycling following ribosome dissociation.

It localises to the cytoplasm. It is found in the nucleus. The protein localises to the nucleolus. Functionally, component of the ribosome, a large ribonucleoprotein complex responsible for the synthesis of proteins in the cell. The small ribosomal subunit (SSU) binds messenger RNAs (mRNAs) and translates the encoded message by selecting cognate aminoacyl-transfer RNA (tRNA) molecules. The large subunit (LSU) contains the ribosomal catalytic site termed the peptidyl transferase center (PTC), which catalyzes the formation of peptide bonds, thereby polymerizing the amino acids delivered by tRNAs into a polypeptide chain. The nascent polypeptides leave the ribosome through a tunnel in the LSU and interact with protein factors that function in enzymatic processing, targeting, and the membrane insertion of nascent chains at the exit of the ribosomal tunnel. Plays a role in the assembly and function of the 40S ribosomal subunit. Mutations in this protein affects the control of translational fidelity. Involved in nucleolar processing of pre-18S ribosomal RNA and ribosome assembly. The polypeptide is Small ribosomal subunit protein uS5 (RPS2) (Homo sapiens (Human)).